Reading from the N-terminus, the 317-residue chain is Flagellar hook-associated protein 3 (317 aa).

This sequence belongs to the bacterial flagellin family.

Its subcellular location is the secreted. It localises to the bacterial flagellum. In Salmonella typhimurium (strain LT2 / SGSC1412 / ATCC 700720), this protein is Flagellar hook-associated protein 3 (flgL).